A 314-amino-acid polypeptide reads, in one-letter code: NADH-ubiquinone oxidoreductase chain 1 (314 aa).

The next 8 membrane-spanning stretches (helical) occupy residues 5-25 (IMPL…VAFL), 78-98 (FSPV…PYLI), 105-125 (LGVL…MIAG), 152-172 (ALIL…SFYF), 176-196 (YVWF…SCLA), 227-247 (LIFL…VVIF), 251-271 (DIYS…FIWV), and 294-314 (LSLN…SLLF).

It belongs to the complex I subunit 1 family.

Its subcellular location is the mitochondrion inner membrane. The catalysed reaction is a ubiquinone + NADH + 5 H(+)(in) = a ubiquinol + NAD(+) + 4 H(+)(out). Functionally, core subunit of the mitochondrial membrane respiratory chain NADH dehydrogenase (Complex I) that is believed to belong to the minimal assembly required for catalysis. Complex I functions in the transfer of electrons from NADH to the respiratory chain. The immediate electron acceptor for the enzyme is believed to be ubiquinone. The protein is NADH-ubiquinone oxidoreductase chain 1 (mt:ND1) of Anopheles gambiae (African malaria mosquito).